Consider the following 597-residue polypeptide: MPSPQLLVLFGSQTGTAQDVSERLGREARRRRLGCRVQALDSYPVVNLINEPLVIFVCATTGQGDPPDNMKNFWRFIFRKNLPSTALCQMDFAVLGLGDSSYAKFNFVAKKLHRRLLQLGGSALLPVCLGDDQHELGPDAAVDPWLRDLWDRVLGLYPPPPGLTEIPPGVPLPSKFTLLFLQEAPSTGSEGQRVAHPGSQEPPSESKPFLAPMISNQRVTGPSHFQDVRLIEFDILGSGISFAAGDVVLIQPSNSAAHVQRFCQVLGLDPDQLFMLQPREPDVSSPTRLPQPCSMRHLVSHYLDIASVPRRSFFELLACLSLHELEREKLLEFSSAQGQEELFEYCNRPRRTILEVLCDFPHTAAAIPPDYLLDLIPVIRPRAFSIASSLLTHPSRLQILVAVVQFQTRLKEPRRGLCSSWLASLDPGQGPVRVPLWVRPGSLAFPETPDTPVIMVGPGTGVAPFRAAIQERVAQGQTGNFLFFGCRWRDQDFYWEAEWQELEKRDCLTLIPAFSREQEQKVYVQHRLRELGSLVWELLDRQGAYFYLAGNAKSMPADVSEALMSIFQEEGGLCSPDAAAYLARLQQTRRFQTETWA.

A Flavodoxin-like domain is found at 6–150; it reads LLVLFGSQTG…AVDPWLRDLW (145 aa). FMN is bound by residues 12 to 17, 59 to 62, 97 to 106, and aspartate 132; these read SQTGTA, ATTG, and LGDSSYAKFN. Residues 188-207 form a disordered region; sequence GSEGQRVAHPGSQEPPSESK. An FAD-binding FR-type domain is found at 206–447; the sequence is SKPFLAPMIS…VRPGSLAFPE (242 aa). FAD-binding positions include arginine 350, 382-385, and 416-419; these read RAFS and GLCS. Residues threonine 460, 515–516, 521–525, and aspartate 558 contribute to the NADP(+) site; these read SR and KVYVQ. Position 596 (tryptophan 596) interacts with FAD.

The protein belongs to the NADPH-dependent diflavin oxidoreductase NDOR1 family. It in the N-terminal section; belongs to the flavodoxin family. In the C-terminal section; belongs to the flavoprotein pyridine nucleotide cytochrome reductase family. As to quaternary structure, interacts with CIAPIN1; as part of the cytosolic iron-sulfur (Fe-S) protein assembly (CIA) machinery. Interacts with DCPS. FAD is required as a cofactor. The cofactor is FMN. As to expression, low expression in brain, heart, kidney, pancreas, prostate and skeletal muscle. Highest levels in the placenta. Expressed in cancer cell lines including promyelocytic leukemia, HeLaS3, chronic myelagenous leukemia, lymphoblastic leukemia, Burkitt's lymphoma, colorectal adenocarcinoma, lung carcinoma, and melanoma G-361.

It localises to the cytoplasm. The protein localises to the perinuclear region. The enzyme catalyses 2 oxidized [2Fe-2S]-[protein] + NADPH = 2 reduced [2Fe-2S]-[protein] + NADP(+) + H(+). Functionally, NADPH-dependent reductase which is a central component of the cytosolic iron-sulfur (Fe-S) protein assembly (CIA) machinery. Transfers electrons from NADPH via its FAD and FMN prosthetic groups to the [2Fe-2S] cluster of CIAPIN1, another key component of the CIA machinery. In turn, this reduced cluster provides electrons for assembly of cytosolic iron-sulfur cluster proteins. It can also reduce the [2Fe-2S] cluster of CISD1 and activate this protein implicated in Fe/S cluster repair. In vitro can fully activate methionine synthase/MTR in the presence of soluble cytochrome b5/CYB5A. This chain is NADPH-dependent diflavin oxidoreductase 1, found in Homo sapiens (Human).